We begin with the raw amino-acid sequence, 47 residues long: PhoP/PhoQ regulator MgrB (47 aa).

Residues 6–26 (WVALVVVVLACLLLWAQVFNM) traverse the membrane as a helical segment.

The protein belongs to the MgrB family. As to quaternary structure, may form homooligomers. Probably interacts with the periplasmic domain of PhoQ.

Its subcellular location is the cell inner membrane. In terms of biological role, phoP-regulated transcription is redox-sensitive, being activated when the periplasm becomes more reducing. MgrB acts between DsbA/DsbB and PhoP/PhoQ in this pathway. Represses PhoP/PhoQ signaling, possibly by binding to the periplasmic domain of PhoQ, altering its activity and that of downstream effector PhoP. The polypeptide is PhoP/PhoQ regulator MgrB (Escherichia coli O127:H6 (strain E2348/69 / EPEC)).